A 178-amino-acid chain; its full sequence is Probetacellulin (178 aa).

A signal peptide spans 1-31 (MARAAPGSGASPLPLLPALALGLVILHCVVA). Over 32 to 118 (DGNSTRSPED…LFYLRGDRGQ (87 aa)) the chain is Extracellular. The N-linked (GlcNAc...) asparagine glycan is linked to Asn34. Residues 65–105 (HFSRCPKQYKHYCIKGRCRFVVAEQTPSCVCDEGYAGARCE) enclose the EGF-like domain. 3 cysteine pairs are disulfide-bonded: Cys69–Cys82, Cys77–Cys93, and Cys95–Cys104. Residues 112–178 (LRGDRGQILV…NDDIQETSIA (67 aa)) constitute a propeptide, removed in mature form. Residues 119–139 (ILVICLIAVMVIFIILVVSIC) traverse the membrane as a helical segment. The Cytoplasmic segment spans residues 140–178 (TCCHPLRKRRKRRKKEEEMETLGKDITPINDDIQETSIA).

Monomer. Interacts with EGFR and ERBB4. As to expression, expressed in a wide range of tissues, including the mammary gland.

The protein resides in the secreted. Its subcellular location is the extracellular space. It localises to the cell membrane. Growth factor that binds to EGFR, ERBB4 and other EGF receptor family members. Potent mitogen for retinal pigment epithelial cells and vascular smooth muscle cells. The chain is Probetacellulin (BTC) from Bos taurus (Bovine).